The primary structure comprises 341 residues: Myb-related transcription factor, partner of profilin (341 aa).

In terms of domain architecture, Myb-like spans 8–80 (VTRLRKPRFS…EVQKRWNDFK (73 aa)). Disordered regions lie at residues 84-103 (KEKL…EEAM), 180-210 (LPHL…PSGV), and 309-341 (AEPP…WKNL). Residues 184–200 (TPSPDPSECPSPPPPGS) show a composition bias toward pro residues. The span at 321 to 341 (NKRKRFGYLSQRKRRGRWKNL) shows a compositional bias: basic residues.

It is found in the nucleus. In terms of biological role, transcriptional repressor; DNA-binding protein that specifically recognizes the core sequence 5'-YAAC[GT]G-3'. The sequence is that of Myb-related transcription factor, partner of profilin (mypop) from Xenopus laevis (African clawed frog).